Here is a 282-residue protein sequence, read N- to C-terminus: Fused uL13/uS9 ribosomal subunit protein (282 aa).

Residues 1–141 (MLLMIINGEG…LGEISELLGA (141 aa)) form a large ribosomal subunit protein uL13 region. The interval 150–282 (MKKVIHTSGK…ARARRQKSYR (133 aa)) is small ribosomal subunit protein uS9. A disordered region spans residues 259–282 (DPRRSEPKKYGGRGARARRQKSYR). Residues 273–282 (ARARRQKSYR) are compositionally biased toward basic residues.

It in the N-terminal section; belongs to the universal ribosomal protein uL13 family. The protein in the C-terminal section; belongs to the universal ribosomal protein uS9 family. L13 is part of the 50S ribosomal subunit. S9 is part of the 30S ribosomal subunit.

L13 protein is one of the early assembly proteins of the 50S ribosomal subunit, although it is not seen to bind rRNA by itself. It is important during the early stages of 50S assembly. The protein is Fused uL13/uS9 ribosomal subunit protein (rpl13/rps9) of Methanothermobacter thermautotrophicus (strain ATCC 29096 / DSM 1053 / JCM 10044 / NBRC 100330 / Delta H) (Methanobacterium thermoautotrophicum).